Reading from the N-terminus, the 321-residue chain is Cytochrome c biogenesis protein CcsA (321 aa).

8 helical membrane passes run 9–29, 44–64, 71–91, 98–118, 143–163, 225–245, 252–272, and 286–306; these read ILTHISFSIISVVITIQLMNL, GMIATFFSITGLLVTRWIYSG, LYESLIFLSWSFSIIHMVPYF, FSAITAPSAIFTQGFATSGLL, MLLSYAALLCGSLLSVALLVI, VISLGFIFLTIGILSGAVWAN, WNWDPKEIWAFITWAIFAIYL, and AIVASIGFLIIWICYFGVNLL.

It belongs to the CcmF/CycK/Ccl1/NrfE/CcsA family. As to quaternary structure, may interact with Ccs1.

The protein localises to the plastid. It is found in the chloroplast thylakoid membrane. Required during biogenesis of c-type cytochromes (cytochrome c6 and cytochrome f) at the step of heme attachment. The sequence is that of Cytochrome c biogenesis protein CcsA from Acorus calamus var. americanus (American sweet flag).